The following is a 319-amino-acid chain: Acetyl esterase (319 aa).

The short motif at 91–93 (HGG) is the Involved in the stabilization of the negatively charged intermediate by the formation of the oxyanion hole element. Active-site residues include Ser165, Asp262, and His292.

This sequence belongs to the 'GDXG' lipolytic enzyme family. As to quaternary structure, homodimer. Interacts with MalT and MelA.

The protein localises to the cytoplasm. Functionally, displays esterase activity towards short chain fatty esters (acyl chain length of up to 8 carbons). Able to hydrolyze triacetylglycerol (triacetin) and tributyrylglycerol (tributyrin), but not trioleylglycerol (triolein) or cholesterol oleate. Negatively regulates MalT activity by antagonizing maltotriose binding. Inhibits MelA galactosidase activity. This chain is Acetyl esterase, found in Escherichia coli O7:K1 (strain IAI39 / ExPEC).